A 675-amino-acid chain; its full sequence is Vitamin K-dependent protein S (675 aa).

The N-terminal stretch at 1 to 24 (MRVLGGRTGTLLACLALVLPVLEA) is a signal peptide. The propeptide occupies 25-41 (NFLSRQHASQVLIRRRR). The region spanning 42–87 (ANTLLEETKKGNLERECIEELCNKEEAREIFENNPETEYFYPKYLG) is the Gla domain. 4-carboxyglutamate is present on residues glutamate 47, glutamate 48, glutamate 55, glutamate 57, glutamate 60, glutamate 61, glutamate 66, glutamate 67, glutamate 70, glutamate 73, and glutamate 77. A disulfide bridge connects residues cysteine 58 and cysteine 63. 16 disulfide bridges follow: cysteine 88–cysteine 113, cysteine 121–cysteine 134, cysteine 126–cysteine 143, cysteine 145–cysteine 154, cysteine 161–cysteine 175, cysteine 171–cysteine 184, cysteine 186–cysteine 199, cysteine 205–cysteine 217, cysteine 212–cysteine 226, cysteine 228–cysteine 241, cysteine 247–cysteine 256, cysteine 252–cysteine 265, cysteine 267–cysteine 282, cysteine 288–cysteine 567, cysteine 449–cysteine 475, and cysteine 638–cysteine 665. The segment at 88–116 (CLGSFRAGLFTAARLSTNAYPDLRSCVNA) is thrombin-sensitive. One can recognise an EGF-like 1 domain in the interval 117–155 (ISDQCNPLPCNEDGFMTCKDGQATFTCICKSGWQGEKCE). Aspartate 136 carries the post-translational modification (3R)-3-hydroxyaspartate. One can recognise an EGF-like 2; calcium-binding domain in the interval 157–200 (DINECKDPVNINGGCSQICENTPGSYHCSCKNGFVMLSNKKDCK). Asparagine 177 is subject to (3R)-3-hydroxyasparagine. An EGF-like 3; calcium-binding domain is found at 201–242 (DVDECVLKPSICGTAVCKNIPGDFECECAEGYKYNPVSKSCD). Asparagine 219 is subject to (3R)-3-hydroxyasparagine. In terms of domain architecture, EGF-like 4; calcium-binding spans 243–283 (DVDECAENLCAQLCVNYPGGYSCYCDGKKGFKLAQDQKSCE). Asparagine 258 is subject to (3R)-3-hydroxyasparagine. Laminin G-like domains are found at residues 299 to 475 (LLYL…NKHC) and 484 to 665 (YYPG…AHSC). Residues asparagine 499 and asparagine 509 are each glycosylated (N-linked (GlcNAc...) asparagine).

The iron and 2-oxoglutarate dependent 3-hydroxylation of aspartate and asparagine is (R) stereospecific within EGF domains. In terms of tissue distribution, plasma.

Its subcellular location is the secreted. Its function is as follows. Anticoagulant plasma protein; it is a cofactor to activated protein C in the degradation of coagulation factors Va and VIIIa. It helps to prevent coagulation and stimulating fibrinolysis. The sequence is that of Vitamin K-dependent protein S (PROS1) from Bos taurus (Bovine).